Here is a 443-residue protein sequence, read N- to C-terminus: Phosphoglucosamine mutase (443 aa).

Ser-100 acts as the Phosphoserine intermediate in catalysis. 4 residues coordinate Mg(2+): Ser-100, Asp-239, Asp-241, and Asp-243. Residue Ser-100 is modified to Phosphoserine.

It belongs to the phosphohexose mutase family. The cofactor is Mg(2+). Post-translationally, activated by phosphorylation.

It catalyses the reaction alpha-D-glucosamine 1-phosphate = D-glucosamine 6-phosphate. Functionally, catalyzes the conversion of glucosamine-6-phosphate to glucosamine-1-phosphate. The sequence is that of Phosphoglucosamine mutase from Shewanella sediminis (strain HAW-EB3).